The primary structure comprises 90 residues: Large ribosomal subunit protein uL16c (90 aa).

This sequence belongs to the universal ribosomal protein uL16 family. In terms of assembly, part of the 50S ribosomal subunit.

It is found in the plastid. It localises to the chloroplast. The protein is Large ribosomal subunit protein uL16c (rpl16) of Oenothera ammophila (Evening primerose).